The following is an 84-amino-acid chain: Cytochrome b559 subunit alpha (84 aa).

A helical membrane pass occupies residues 22-36 (IIHSITIPSLFVAGF). Heme is bound at residue histidine 24.

This sequence belongs to the PsbE/PsbF family. Heterodimer of an alpha subunit and a beta subunit. PSII is composed of 1 copy each of membrane proteins PsbA, PsbB, PsbC, PsbD, PsbE, PsbF, PsbH, PsbI, PsbJ, PsbK, PsbL, PsbM, PsbT, PsbX, PsbY, PsbZ, Psb30/Ycf12, at least 3 peripheral proteins of the oxygen-evolving complex and a large number of cofactors. It forms dimeric complexes. Heme b serves as cofactor.

The protein resides in the plastid. It localises to the chloroplast thylakoid membrane. In terms of biological role, this b-type cytochrome is tightly associated with the reaction center of photosystem II (PSII). PSII is a light-driven water:plastoquinone oxidoreductase that uses light energy to abstract electrons from H(2)O, generating O(2) and a proton gradient subsequently used for ATP formation. It consists of a core antenna complex that captures photons, and an electron transfer chain that converts photonic excitation into a charge separation. The polypeptide is Cytochrome b559 subunit alpha (Emiliania huxleyi (Coccolithophore)).